The chain runs to 165 residues: Cytochrome c-type biogenesis protein CcmE (165 aa).

Residues 1 to 29 (MSATAEQNARNPKGKGGFARTVSQRKRKR) lie on the Cytoplasmic side of the membrane. A helical; Signal-anchor for type II membrane protein transmembrane segment spans residues 30-50 (LFLIGGALAVLAVAVGLMLTA). The Periplasmic portion of the chain corresponds to 51 to 165 (FNQDIRFFRT…LKKKGVWEGK (115 aa)). Histidine 143 and tyrosine 147 together coordinate heme.

Belongs to the CcmE/CycJ family.

It localises to the cell inner membrane. Functionally, heme chaperone required for the biogenesis of c-type cytochromes. Transiently binds heme delivered by CcmC and transfers the heme to apo-cytochromes in a process facilitated by CcmF and CcmH. In Brucella abortus (strain S19), this protein is Cytochrome c-type biogenesis protein CcmE.